Here is a 233-residue protein sequence, read N- to C-terminus: Large ribosomal subunit protein uL1 (233 aa).

Belongs to the universal ribosomal protein uL1 family. In terms of assembly, part of the 50S ribosomal subunit.

In terms of biological role, binds directly to 23S rRNA. The L1 stalk is quite mobile in the ribosome, and is involved in E site tRNA release. Protein L1 is also a translational repressor protein, it controls the translation of the L11 operon by binding to its mRNA. The protein is Large ribosomal subunit protein uL1 of Shewanella putrefaciens (strain CN-32 / ATCC BAA-453).